Here is a 320-residue protein sequence, read N- to C-terminus: Myoblast determination protein 1 (320 aa).

Residue Met1 forms a Peptide (Met-Gly) (interchain with G-Cter in ubiquitin) linkage. N6-methyllysine; by EHMT2 is present on Lys104. The bHLH domain maps to 109–160; that stretch reads DRRKAATMRERRRLSKVNEAFETLKRCTSSNPNQRLPKVEILRNAIRYIEGL. 2 disordered regions span residues 174-219 and 262-320; these read AAAA…PPSG and ESPA…YQVL. 2 stretches are compositionally biased toward polar residues: residues 197–207 and 291–301; these read SDASSPRSNCS and GESSGDPTQSP.

In terms of assembly, efficient DNA binding requires dimerization with another bHLH protein. Seems to form active heterodimers with ITF-2. Interacts with SUV39H1. Interacts with DDX5. Interacts with CHD2. Interacts with TSC22D3. Interacts with SETD3. Interacts with P-TEFB complex; promotes the transcriptional activity of MYOD1 through its CDK9-mediated phosphorylation. Interacts with CSRP3. Interacts with NUPR1. Post-translationally, phosphorylated by CDK9. This phosphorylation promotes its function in muscle differentiation. Acetylated by a complex containing EP300 and PCAF. The acetylation is essential to activate target genes. Conversely, its deacetylation by SIRT1 inhibits its function. In terms of processing, ubiquitinated on the N-terminus; which is required for proteasomal degradation. Post-translationally, methylation at Lys-104 by EHMT2/G9a inhibits myogenic activity.

Its subcellular location is the nucleus. Its function is as follows. Acts as a transcriptional activator that promotes transcription of muscle-specific target genes and plays a role in muscle differentiation. Together with MYF5 and MYOG, co-occupies muscle-specific gene promoter core region during myogenesis. Induces fibroblasts to differentiate into myoblasts. Interacts with and is inhibited by the twist protein. This interaction probably involves the basic domains of both proteins. This is Myoblast determination protein 1 (MYOD1) from Homo sapiens (Human).